The chain runs to 332 residues: dTDP-3,4-didehydro-2,6-dideoxy-alpha-D-glucose 3-reductase (332 aa).

12–18 lines the NADP(+) pocket; that stretch reads CASFAWR. Position 19 (Arg19) interacts with substrate. NADP(+) is bound by residues 37-38, Tyr58, Leu74, and His79; that span reads SR. Lys97 serves as the catalytic Proton donor. Arg165 and Asp177 together coordinate NADP(+). Substrate contacts are provided by Tyr235 and Thr255.

This sequence belongs to the Gfo/Idh/MocA family. In terms of assembly, monomer.

It catalyses the reaction dTDP-4-dehydro-2,6-dideoxy-alpha-D-glucose + NADP(+) = dTDP-3,4-didehydro-2,6-dideoxy-alpha-D-glucose + NADPH + H(+). Its function is as follows. Involved in the biosynthesis of forosamine ((4-dimethylamino)-2,3,4,6-tetradeoxy-alpha-D-threo-hexopyranose), a highly deoxygenated sugar component of several bioactive natural products such as the insecticidal spinosyns A and D. Catalyzes the reduction of the C-3 keto moiety of dTDP-3,4-diketo-2,6-dideoxy-alpha-D-glucose to yield dTDP-4-keto-2,6-dideoxy-alpha-D-glucose. NADPH is the better reductant, however NADH can also be used. This Saccharopolyspora spinosa protein is dTDP-3,4-didehydro-2,6-dideoxy-alpha-D-glucose 3-reductase.